Consider the following 301-residue polypeptide: Diaminopimelate epimerase (301 aa).

Substrate contacts are provided by asparagine 15, glutamine 47, and asparagine 67. Cysteine 76 functions as the Proton donor in the catalytic mechanism. Substrate is bound by residues 77-78, asparagine 163, asparagine 197, and 215-216; these read GN and ER. Cysteine 224 serves as the catalytic Proton acceptor. 225–226 provides a ligand contact to substrate; the sequence is GS.

The protein belongs to the diaminopimelate epimerase family. As to quaternary structure, homodimer.

The protein localises to the cytoplasm. The catalysed reaction is (2S,6S)-2,6-diaminopimelate = meso-2,6-diaminopimelate. It functions in the pathway amino-acid biosynthesis; L-lysine biosynthesis via DAP pathway; DL-2,6-diaminopimelate from LL-2,6-diaminopimelate: step 1/1. Functionally, catalyzes the stereoinversion of LL-2,6-diaminopimelate (L,L-DAP) to meso-diaminopimelate (meso-DAP), a precursor of L-lysine and an essential component of the bacterial peptidoglycan. The sequence is that of Diaminopimelate epimerase from Rhizobium etli (strain ATCC 51251 / DSM 11541 / JCM 21823 / NBRC 15573 / CFN 42).